Here is a 31-residue protein sequence, read N- to C-terminus: Photosystem II reaction center protein T (31 aa).

The helical transmembrane segment at 3-23 threads the bilayer; the sequence is SFAYILILTLAIATLFFAIAF.

Belongs to the PsbT family. PSII is composed of 1 copy each of membrane proteins PsbA, PsbB, PsbC, PsbD, PsbE, PsbF, PsbH, PsbI, PsbJ, PsbK, PsbL, PsbM, PsbT, PsbX, PsbY, PsbZ, Psb30/Ycf12, peripheral proteins PsbO, CyanoQ (PsbQ), PsbU, PsbV and a large number of cofactors. It forms dimeric complexes.

The protein localises to the cellular thylakoid membrane. In terms of biological role, found at the monomer-monomer interface of the photosystem II (PS II) dimer, plays a role in assembly and dimerization of PSII. PSII is a light-driven water plastoquinone oxidoreductase, using light energy to abstract electrons from H(2)O, generating a proton gradient subsequently used for ATP formation. This chain is Photosystem II reaction center protein T, found in Synechococcus sp. (strain WH7803).